A 137-amino-acid chain; its full sequence is Gonadotropin subunit beta-2 (137 aa).

The signal sequence occupies residues 1 to 24 (MLPFMLSSFLGASPSIWPLAPAEA). Disulfide bonds link C30-C76, C44-C91, C47-C129, C55-C107, C59-C109, and C112-C119. N34 carries N-linked (GlcNAc...) asparagine glycosylation.

Belongs to the glycoprotein hormones subunit beta family. In terms of assembly, heterodimer of an alpha and a beta chain.

Its subcellular location is the secreted. Its function is as follows. Involved in gametogenesis and steroidogenesis. The sequence is that of Gonadotropin subunit beta-2 (cgbb) from Acanthopagrus latus (Yellowfin seabream).